The chain runs to 96 residues: Muconolactone Delta-isomerase (96 aa).

The protein belongs to the muconolactone Delta-isomerase family. Homodecamer.

The catalysed reaction is (S)-muconolactone = (4,5-dihydro-5-oxofuran-2-yl)-acetate. The protein operates within aromatic compound metabolism; beta-ketoadipate pathway; 5-oxo-4,5-dihydro-2-furylacetate from catechol: step 3/3. This Acinetobacter baylyi (strain ATCC 33305 / BD413 / ADP1) protein is Muconolactone Delta-isomerase (catC).